An 824-amino-acid polypeptide reads, in one-letter code: Dapper 1 (824 aa).

Disordered regions lie at residues 1-34 (MKPI…QRTR), 61-80 (ALTP…GDTP), 131-150 (EEHL…LSDG), 454-487 (TSNV…ESTQ), and 516-536 (ASSS…SSSQ). The interaction with tcf7l1 stretch occupies residues 2–343 (KPIPATPDHL…PVRTNKPRTS (342 aa)). The segment covering 11–34 (LGQHQESPRRKDKGEAESERQRTR) has biased composition (basic and acidic residues). Residues 19 to 47 (RRKDKGEAESERQRTRERLEATLAGLAEL) adopt a coiled-coil conformation. Positions 520 to 530 (FDERPPLDFKS) are enriched in basic and acidic residues. The PDZ-binding motif lies at 821 to 824 (MTTV).

Belongs to the dapper family. Interacts with dbf4, dvl2 and tcf7l1.

It is found in the cytoplasm. The protein localises to the nucleus. Functionally, involved in regulation of intracellular signaling pathways during development. Specifically thought to play a role in canonical and/or non-canonical Wnt signaling pathways through interaction with DSH (Dishevelled) family proteins. Binds to dvl2 and regulates the degradation of ctnnb1/beta-catenin, thereby modulating the transcriptional activation of target genes of the Wnt signaling pathway. May also bind to and directly stimulate the activity of tcf7l1. This chain is Dapper 1 (dact1), found in Xenopus tropicalis (Western clawed frog).